Consider the following 351-residue polypeptide: DNA polymerase IV (351 aa).

The UmuC domain occupies 4 to 185 (IIHVDMDCFF…LPLAKIPGVG (182 aa)). Asp-8 and Asp-103 together coordinate Mg(2+). Glu-104 is an active-site residue.

The protein belongs to the DNA polymerase type-Y family. Monomer. It depends on Mg(2+) as a cofactor.

Its subcellular location is the cytoplasm. The enzyme catalyses DNA(n) + a 2'-deoxyribonucleoside 5'-triphosphate = DNA(n+1) + diphosphate. Its function is as follows. Poorly processive, error-prone DNA polymerase involved in untargeted mutagenesis. Copies undamaged DNA at stalled replication forks, which arise in vivo from mismatched or misaligned primer ends. These misaligned primers can be extended by PolIV. Exhibits no 3'-5' exonuclease (proofreading) activity. May be involved in translesional synthesis, in conjunction with the beta clamp from PolIII. This chain is DNA polymerase IV, found in Escherichia coli O139:H28 (strain E24377A / ETEC).